A 137-amino-acid chain; its full sequence is uncharacterized protein (137 aa).

A helical membrane pass occupies residues 111–131; that stretch reads LAVGVLVGSNLVVGSLVFALL.

Its subcellular location is the membrane. This is an uncharacterized protein from Saccharomyces cerevisiae (strain ATCC 204508 / S288c) (Baker's yeast).